We begin with the raw amino-acid sequence, 417 residues long: Leucine-rich repeat-containing protein 42 (417 aa).

LRR repeat units follow at residues 167-188, 195-215, 227-248, and 252-273; these read CLHS…LAHL, SLTE…QKMT, KLKV…CFLF, and LLKF…LKKI. The disordered stretch occupies residues 360–390; sequence FFRPKEQKDPDSSNSEKRRHSTKRTGADCVQ. The segment covering 362–375 has biased composition (basic and acidic residues); that stretch reads RPKEQKDPDSSNSE.

Belongs to the LRRC42 family.

The polypeptide is Leucine-rich repeat-containing protein 42 (lrrc42) (Xenopus laevis (African clawed frog)).